A 64-amino-acid polypeptide reads, in one-letter code: Large ribosomal subunit protein uL29 (64 aa).

This sequence belongs to the universal ribosomal protein uL29 family.

This Polynucleobacter necessarius subsp. necessarius (strain STIR1) protein is Large ribosomal subunit protein uL29.